The following is a 254-amino-acid chain: Thiazole synthase (254 aa).

Catalysis depends on Lys96, which acts as the Schiff-base intermediate with DXP. 1-deoxy-D-xylulose 5-phosphate-binding positions include Gly157, 183–184 (AG), and 205–206 (NT).

Belongs to the ThiG family. Homotetramer. Forms heterodimers with either ThiH or ThiS.

The protein resides in the cytoplasm. The enzyme catalyses [ThiS sulfur-carrier protein]-C-terminal-Gly-aminoethanethioate + 2-iminoacetate + 1-deoxy-D-xylulose 5-phosphate = [ThiS sulfur-carrier protein]-C-terminal Gly-Gly + 2-[(2R,5Z)-2-carboxy-4-methylthiazol-5(2H)-ylidene]ethyl phosphate + 2 H2O + H(+). The protein operates within cofactor biosynthesis; thiamine diphosphate biosynthesis. Catalyzes the rearrangement of 1-deoxy-D-xylulose 5-phosphate (DXP) to produce the thiazole phosphate moiety of thiamine. Sulfur is provided by the thiocarboxylate moiety of the carrier protein ThiS. In vitro, sulfur can be provided by H(2)S. The sequence is that of Thiazole synthase from Bacillus velezensis (strain DSM 23117 / BGSC 10A6 / LMG 26770 / FZB42) (Bacillus amyloliquefaciens subsp. plantarum).